The sequence spans 446 residues: Chromosomal replication initiator protein DnaA (446 aa).

Positions 1 to 73 are domain I, interacts with DnaA modulators; the sequence is MAAQLNELWQ…INSMKIITTK (73 aa). The interval 73-107 is domain II; it reads KKYDIAFLISSEEALETDEDQETDTNNVNTDTSSS. Residues 108–324 form a domain III, AAA+ region region; that stretch reads MLNPKYKFDS…GALIRIVAFS (217 aa). ATP-binding residues include Gly-152, Gly-154, Lys-155, and Thr-156. The interval 325 to 446 is domain IV, binds dsDNA; the sequence is SLTNKEISVD…NEITKRFSPK (122 aa).

This sequence belongs to the DnaA family. In terms of assembly, oligomerizes as a right-handed, spiral filament on DNA at oriC.

The protein resides in the cytoplasm. In terms of biological role, plays an essential role in the initiation and regulation of chromosomal replication. ATP-DnaA binds to the origin of replication (oriC) to initiate formation of the DNA replication initiation complex once per cell cycle. Binds the DnaA box (a 9 base pair repeat at the origin) and separates the double-stranded (ds)DNA. Forms a right-handed helical filament on oriC DNA; dsDNA binds to the exterior of the filament while single-stranded (ss)DNA is stabiized in the filament's interior. The ATP-DnaA-oriC complex binds and stabilizes one strand of the AT-rich DNA unwinding element (DUE), permitting loading of DNA polymerase. After initiation quickly degrades to an ADP-DnaA complex that is not apt for DNA replication. Binds acidic phospholipids. This Clostridium acetobutylicum (strain ATCC 824 / DSM 792 / JCM 1419 / IAM 19013 / LMG 5710 / NBRC 13948 / NRRL B-527 / VKM B-1787 / 2291 / W) protein is Chromosomal replication initiator protein DnaA.